The primary structure comprises 215 residues: uncharacterized protein (215 aa).

Helical transmembrane passes span 9–29, 50–70, 77–97, 107–127, and 160–180; these read WTFY…TIEG, LTVG…TSLF, IGAL…NFIL, IIVF…YVSA, and ILFA…LTAI.

The protein resides in the cell membrane. This is an uncharacterized protein from Bacillus subtilis (strain 168).